Consider the following 277-residue polypeptide: Collectin-10 (277 aa).

The signal sequence occupies residues 1–27 (MNGFASLLRRNQFILLVLFLLQIQSLG). A disordered region spans residues 40–107 (ATHTISPGPK…GDKGEKGLLG (68 aa)). The span at 49 to 64 (KGDDGEKGDPGEEGKH) shows a compositional bias: basic and acidic residues. Residues 53–112 (GEKGDPGEEGKHGKVGRMGPKGIKGELGDMGDQGNIGKTGPIGKKGDKGEKGLLGIPGEK) form the Collagen-like domain. One can recognise a C-type lectin domain in the interval 155–271 (TEEKFYYIVQ…CHLTMYFVCE (117 aa)). 2 disulfide bridges follow: Cys-176–Cys-270 and Cys-248–Cys-262. N-linked (GlcNAc...) asparagine glycosylation is present at Asn-258.

This sequence belongs to the COLEC10/COLEC11 family. In terms of tissue distribution, highly expressed in liver, placenta and adrenal gland. Moderately expressed in small intestine, lung, stomach and prostate. Weakly expressed in trachea and spleen.

The protein resides in the secreted. The protein localises to the golgi apparatus. It is found in the cytoplasm. Lectin that binds to various sugars: galactose &gt; mannose = fucose &gt; N-acetylglucosamine &gt; N-acetylgalactosamine. Acts as a chemoattractant, probably involved in the regulation of cell migration. This chain is Collectin-10 (COLEC10), found in Homo sapiens (Human).